Reading from the N-terminus, the 272-residue chain is Indole-3-glycerol phosphate synthase (272 aa).

This sequence belongs to the TrpC family.

The enzyme catalyses 1-(2-carboxyphenylamino)-1-deoxy-D-ribulose 5-phosphate + H(+) = (1S,2R)-1-C-(indol-3-yl)glycerol 3-phosphate + CO2 + H2O. It participates in amino-acid biosynthesis; L-tryptophan biosynthesis; L-tryptophan from chorismate: step 4/5. The protein is Indole-3-glycerol phosphate synthase of Paenarthrobacter aurescens (strain TC1).